A 550-amino-acid polypeptide reads, in one-letter code: Coiled-coil domain-containing protein 60 (550 aa).

The tract at residues 1-21 (MTKVPATKKLQSSPNSGAVRP) is disordered. The stretch at 71–98 (AILREETAKKKKQQQLQKLKEEERNKFQ) forms a coiled coil. 2 disordered regions span residues 219–293 (KFKI…EPLY) and 336–367 (AYKE…KKSK). Over residues 235-256 (RGSTLSLSRASGGSSPQSSMIS) the composition is skewed to low complexity. Positions 336–345 (AYKEMQTTLK) are enriched in polar residues.

This is Coiled-coil domain-containing protein 60 (CCDC60) from Homo sapiens (Human).